We begin with the raw amino-acid sequence, 732 residues long: Catalase-peroxidase (732 aa).

Residues 1–26 form a disordered region; it reads MADNKKSPETGGITMQIPGKGRTNRD. The tryptophyl-tyrosyl-methioninium (Trp-Tyr) (with M-245) cross-link spans 96–219; the sequence is WHSAGTYRTF…LAAVQMGLIY (124 aa). The active-site Proton acceptor is histidine 97. A cross-link (tryptophyl-tyrosyl-methioninium (Tyr-Met) (with W-96)) is located at residues 219-245; the sequence is YVNPEGPDGNPDPVAAARDIREVFARM. Histidine 260 contributes to the heme b binding site. Residues 344-365 form a disordered region; sequence KPKGEAGAGTVPDPHDPKKRHA.

The protein belongs to the peroxidase family. Peroxidase/catalase subfamily. As to quaternary structure, homodimer or homotetramer. The cofactor is heme b. Post-translationally, formation of the three residue Trp-Tyr-Met cross-link is important for the catalase, but not the peroxidase activity of the enzyme.

The enzyme catalyses H2O2 + AH2 = A + 2 H2O. The catalysed reaction is 2 H2O2 = O2 + 2 H2O. Its function is as follows. Bifunctional enzyme with both catalase and broad-spectrum peroxidase activity. This chain is Catalase-peroxidase, found in Methanospirillum hungatei JF-1 (strain ATCC 27890 / DSM 864 / NBRC 100397 / JF-1).